The primary structure comprises 88 residues: Small ribosomal subunit protein bS20 (88 aa).

This sequence belongs to the bacterial ribosomal protein bS20 family.

Binds directly to 16S ribosomal RNA. The protein is Small ribosomal subunit protein bS20 of Nitrobacter winogradskyi (strain ATCC 25391 / DSM 10237 / CIP 104748 / NCIMB 11846 / Nb-255).